A 1170-amino-acid polypeptide reads, in one-letter code: Type I restriction enzyme EcoKI endonuclease subunit (1170 aa).

The stretch at 143 to 229 (YHQEVLTLKQ…QERKAYHKEI (87 aa)) forms a coiled coil. The H-T-H motif DNA-binding region spans 431–450 (NQWFADNPGMSELGLRYYQE). In terms of domain architecture, Helicase ATP-binding spans 458-639 (KAIVKGQQEI…GEPVYRYTYR (182 aa)). 472–478 (ATGTGKT) lines the ATP pocket. Positions 574–577 (DEAH) match the DEAH box motif. The Helicase C-terminal domain occupies 714-879 (ELTNYLDPTG…TLVNEITDSE (166 aa)).

Belongs to the HsdR family. The type I restriction/modification system is composed of three polypeptides R, M and S. The restriction enzyme has stoichiometry R(2)M(2)S(1). The methyltransferase is composed of M(2)S(1). In terms of assembly, (Microbial infection) Interacts with Escherichia phage T7 protein Ocr; this interaction leads to the inhibition of the type I bifunctional endonuclease and methyltransferase restriction enzyme R.EcoKI composed of R(2)M(2)S(1). Post-translationally, upon purification after overexpression about one-third has the initiating methionine removed.

The catalysed reaction is Endonucleolytic cleavage of DNA to give random double-stranded fragments with terminal 5'-phosphates, ATP is simultaneously hydrolyzed.. Functionally, the subtype A restriction (R) subunit of a type I restriction enzyme that recognizes 5'-AACN(6)GTGC-3' and cleaves a random distance away. The R subunit is required for both endonuclease and ATPase activities but not for modification. Has endonucleolytic activity that requires Mg(2+), ATP and S-adenosyl-L-methionine (SAM); ATP can be replaced by dATP, no tested molecule could substitute for SAM. Generates double-stranded DNA with no nicks, by cutting one strand then the other within a few seconds. Cleaves only non-methylated DNA, hemi-methylated and fully methylated DNA are not substrates. After locating a non-methylated recognition site, the enzyme complex serves as a molecular motor that translocates DNA in an ATP-dependent manner until a collision occurs that triggers cleavage. In Escherichia coli (strain K12), this protein is Type I restriction enzyme EcoKI endonuclease subunit.